The chain runs to 291 residues: Ribonuclease Z (291 aa).

Zn(2+) is bound by residues H60, H62, D64, H65, H132, D200, and H256. D64 serves as the catalytic Proton acceptor.

This sequence belongs to the RNase Z family. As to quaternary structure, homodimer. It depends on Zn(2+) as a cofactor.

It catalyses the reaction Endonucleolytic cleavage of RNA, removing extra 3' nucleotides from tRNA precursor, generating 3' termini of tRNAs. A 3'-hydroxy group is left at the tRNA terminus and a 5'-phosphoryl group is left at the trailer molecule.. Functionally, zinc phosphodiesterase, which displays some tRNA 3'-processing endonuclease activity. Probably involved in tRNA maturation, by removing a 3'-trailer from precursor tRNA. The sequence is that of Ribonuclease Z from Metallosphaera sedula (strain ATCC 51363 / DSM 5348 / JCM 9185 / NBRC 15509 / TH2).